Consider the following 243-residue polypeptide: Ribosomal RNA small subunit methyltransferase G (243 aa).

S-adenosyl-L-methionine contacts are provided by residues Gly79, Phe84, Ala130 to Glu131, and Arg150. Residues Glu219 to Lys243 are disordered.

It belongs to the methyltransferase superfamily. RNA methyltransferase RsmG family.

The protein localises to the cytoplasm. Its function is as follows. Specifically methylates the N7 position of a guanine in 16S rRNA. This Pediococcus pentosaceus (strain ATCC 25745 / CCUG 21536 / LMG 10740 / 183-1w) protein is Ribosomal RNA small subunit methyltransferase G.